The following is a 253-amino-acid chain: A-type ATP synthase subunit B (253 aa).

The protein belongs to the ATPase alpha/beta chains family. In terms of assembly, has multiple subunits with at least A(3), B(3), C, D, E, F, H, I and proteolipid K(x).

It localises to the cell membrane. Functionally, component of the A-type ATP synthase that produces ATP from ADP in the presence of a proton gradient across the membrane. The B chain is a regulatory subunit. The sequence is that of A-type ATP synthase subunit B from Methanothermococcus thermolithotrophicus (Methanococcus thermolithotrophicus).